The primary structure comprises 197 residues: Xanthine phosphoribosyltransferase (197 aa).

Xanthine contacts are provided by leucine 20 and asparagine 27. 5-phospho-alpha-D-ribose 1-diphosphate is bound at residue 128 to 132 (ANGQA). A xanthine-binding site is contributed by lysine 156.

Belongs to the purine/pyrimidine phosphoribosyltransferase family. Xpt subfamily. As to quaternary structure, homodimer.

It is found in the cytoplasm. It carries out the reaction XMP + diphosphate = xanthine + 5-phospho-alpha-D-ribose 1-diphosphate. Its pathway is purine metabolism; XMP biosynthesis via salvage pathway; XMP from xanthine: step 1/1. Converts the preformed base xanthine, a product of nucleic acid breakdown, to xanthosine 5'-monophosphate (XMP), so it can be reused for RNA or DNA synthesis. The sequence is that of Xanthine phosphoribosyltransferase from Bacillus cereus (strain ATCC 14579 / DSM 31 / CCUG 7414 / JCM 2152 / NBRC 15305 / NCIMB 9373 / NCTC 2599 / NRRL B-3711).